The primary structure comprises 385 residues: Serpin-Z10 (385 aa).

Residues 333–357 (GTEAAAVSVGVVSCTSFRRNPDFVA) form an RCL region.

The protein belongs to the serpin family.

Probable serine protease inhibitor. This chain is Serpin-Z10, found in Arabidopsis thaliana (Mouse-ear cress).